The sequence spans 268 residues: Tetratricopeptide repeat protein 33 (268 aa).

The tract at residues 14-34 (VSKQTVQQFEQDSEQADEDEV) is disordered. Acidic residues predominate over residues 24–34 (QDSEQADEDEV). 3 TPR repeats span residues 60–93 (SKRL…TPED), 94–127 (AVLY…RPIW), and 128–161 (WEAW…HPSE). The tract at residues 249–268 (EGDDNPTSSSQSVLIKARGL) is disordered.

In Danio rerio (Zebrafish), this protein is Tetratricopeptide repeat protein 33 (ttc33).